The sequence spans 1013 residues: Poly [ADP-ribose] polymerase 1 (1013 aa).

At alanine 2 the chain carries N-acetylalanine. Residues 9–93 form a PARP-type 1 zinc finger; it reads YRVEYAKSGR…KVKKTAEAGG (85 aa). Positions 21 and 24 each coordinate Zn(2+). Phosphoserine is present on serine 41. Residues histidine 53 and cysteine 56 each coordinate Zn(2+). An N6-acetyllysine mark is found at lysine 97 and lysine 105. The PARP-type 2 zinc finger occupies 113–203; it reads FAAEYAKSNR…VLKKQLPGVK (91 aa). Positions 125 and 128 each coordinate Zn(2+). Position 131 is an N6-acetyllysine (lysine 131). Zn(2+) is bound by residues histidine 159 and cysteine 162. Phosphoserine is present on residues serine 177, serine 179, and serine 185. Residue lysine 192 forms a Glycyl lysine isopeptide (Lys-Gly) (interchain with G-Cter in SUMO2) linkage. The tract at residues 198 to 233 is disordered; sequence QLPGVKSEGKRKGDEVDGADEVAKKKSKKGKDKDSK. A Glycyl lysine isopeptide (Lys-Gly) (interchain with G-Cter in SUMO1); alternate cross-link involves residue lysine 203. Lysine 203 participates in a covalent cross-link: Glycyl lysine isopeptide (Lys-Gly) (interchain with G-Cter in SUMO2); alternate. 2 short sequence motifs (nuclear localization signal) span residues 207 to 209 and 221 to 226; these read KRK and KKKSKK. Residues 225-359 enclose the PADR1 zinc-binding domain; the sequence is KKGKDKDSKL…VKKQDRIFPP (135 aa). Lysine 249 participates in a covalent cross-link: Glycyl lysine isopeptide (Lys-Gly) (interchain with G-Cter in SUMO2). A phosphoserine mark is found at serine 274 and serine 277. The segment at 290-332 is zinc ribbon; the sequence is GALLPCKECSGQLVFKSDAYYCTGDVTAWTKCMVKTQTPSRKE. Zn(2+) is bound by residues cysteine 295, cysteine 298, cysteine 311, and cysteine 321. A disordered region spans residues 357–383; the sequence is FPPETSAPAPPHLPPSVTSAPTAVNSS. A compositionally biased stretch (polar residues) spans 372–383; the sequence is SVTSAPTAVNSS. The automodification domain stretch occupies residues 373–523; the sequence is VTSAPTAVNS…GVNKSEKRMK (151 aa). The 92-residue stretch at 385–476 folds into the BRCT domain; the sequence is PADKPLSNMK…KSLQELLSAH (92 aa). Aspartate 387 is subject to PolyADP-ribosyl aspartic acid. PolyADP-ribosyl glutamic acid occurs at positions 407, 413, 435, 437, 444, 445, and 456. Lysine 467 participates in a covalent cross-link: Glycyl lysine isopeptide (Lys-Gly) (interchain with G-Cter in SUMO2). 2 positions are modified to polyADP-ribosyl glutamic acid: glutamate 471 and glutamate 484. A Glycyl lysine isopeptide (Lys-Gly) (interchain with G-Cter in SUMO1); alternate cross-link involves residue lysine 486. A Glycyl lysine isopeptide (Lys-Gly) (interchain with G-Cter in SUMO2); alternate cross-link involves residue lysine 486. A polyADP-ribosyl glutamic acid mark is found at glutamate 488 and glutamate 491. The disordered stretch occupies residues 495–516; that stretch reads PKGKSAAPSKKSKGLYKEEGVN. Residues serine 499, serine 503, and serine 506 each carry the ADP-ribosylserine modification. Residue lysine 511 forms a Glycyl lysine isopeptide (Lys-Gly) (interchain with G-Cter in SUMO2) linkage. PolyADP-ribosyl glutamic acid occurs at positions 512 and 513. Serine 518 carries the ADP-ribosylserine modification. Glutamate 519 is subject to PolyADP-ribosyl glutamic acid. Position 520 is an N6-(ADP-ribosyl)lysine (lysine 520). Lysine 527 is covalently cross-linked (Glycyl lysine isopeptide (Lys-Gly) (interchain with G-Cter in SUMO2)). The region spanning 541–637 is the WGR domain; sequence SAHVLEKGGK…KNFTKYPKKF (97 aa). Phosphothreonine is present on threonine 593. Residues lysine 599 and lysine 620 each carry the N6-acetyllysine modification. The 118-residue stretch at 661-778 folds into the PARP alpha-helical domain; it reads KSKLPKAVQE…DIEVAYSLLR (118 aa). Residue lysine 747 forms a Glycyl lysine isopeptide (Lys-Gly) (interchain with G-Cter in SUMO1); alternate linkage. Residue lysine 747 forms a Glycyl lysine isopeptide (Lys-Gly) (interchain with G-Cter in SUMO2); alternate linkage. 2 positions are modified to phosphoserine: serine 781 and serine 785. Residues 787–1013 form the PARP catalytic domain; sequence DPIDVNYEKL…LKFNFKTSLW (227 aa). Residues 861-863, glycine 870, arginine 877, and serine 903 each bind NAD(+); that span reads HGS. Glutamate 987 acts as the For poly [ADP-ribose] polymerase activity in catalysis.

Belongs to the ARTD/PARP family. Homodimer; PARP-type zinc-fingers from separate PARP1 molecules form a dimer module that specifically recognizes DNA strand breaks. Heterodimer; heterodimerizes with PARP2. Interacts (via the PARP catalytic domain) with HPF1. Interacts with NMNAT1. Interacts with nucleosomes; with a preference for nucleosomes containing H2A.X. Interacts with APTX. Component of a base excision repair (BER) complex, containing at least XRCC1, PARP1, PARP2, POLB and LRIG3. Interacts with SRY. The SWAP complex consists of NPM1, NCL, PARP1 and SWAP70. Interacts with TIAM2. Interacts with PARP3; leading to activate PARP1 in absence of DNA. Interacts (when poly-ADP-ribosylated) with CHD1L (via macro domain). Interacts with the DNA polymerase alpha catalytic subunit POLA1; this interaction functions as part of the control of replication fork progression. Interacts with EEF1A1 and TXK. Interacts with RNF4. Interacts with RNF146. Interacts with ZNF423. Interacts with APLF. Interacts with SNAI1 (via zinc fingers); the interaction requires SNAI1 to be poly-ADP-ribosylated and non-phosphorylated (active) by GSK3B. Interacts (when poly-ADP-ribosylated) with PARP9. Interacts with NR4A3; activates PARP1 by improving acetylation of PARP1 and suppressing the interaction between PARP1 and SIRT1. Interacts (via catalytic domain) with PUM3; the interaction inhibits the poly-ADP-ribosylation activity of PARP1 and the degradation of PARP1 by CASP3 following genotoxic stress. Interacts with ZNF365. Interacts with RRP1B. Interacts with TIMELESS; the interaction is direct. Interacts with CGAS; leading to impede the formation of the PARP1-TIMELESS complex. Interacts with KHDC3L, the interaction is increased following the formation of DNA double-strand breaks. Interacts (when auto-poly-ADP-ribosylated) with XRCC1; leading to inhibit PARP1 ADP-ribosyltransferase activity. Interacts with SPINDOC; promoting PARP1 ADP-ribosyltransferase activity. Interacts with BANF1; leading to inhibit PARP1 ADP-ribosyltransferase activity in response to oxidative DNA damage. Interacts (when sumoylated and ubiquitinated) with VCP/p97; leading to its extraction from chromatin. Interacts with YARS1; promoting PARP1 ADP-ribosyltransferase activity. Interacts with PACMP micropeptide; Interacts with PACMP micropeptide; interaction. Interacts (when poly-ADP-ribosylated) with isoform 1 of MACROH2A1; MACROH2A1 specifically binds to poly-ADP-ribose chains and inhibits PARP1 activity, limiting the consumption of nuclear NAD(+). Interacts with CARM1; promoting recruitment to replication forks. Interacts with RECQL. Interacts with ZNF32; the interaction reshapes ZNF432 interacting proteins. Interacts with TPRN; TPRN interacts with a number of DNA damage response proteins, is recruited to sites of DNA damage and may play a role in DNA damage repair. In terms of assembly, interacts (when auto-poly-ADP-ribosylated) with AIFM1. Poly-ADP-ribosylated on serine, glutamate and aspartate residues by autocatalysis. Auto-ADP-ribosylation on serine takes place following interaction with HPF1. Auto poly-ADP-ribosylation on serine residues promotes its dissociation from chromatin. Poly-ADP-ribosylated by PARP2; poly-ADP-ribosylation mediates the recruitment of CHD1L to DNA damage sites. Mono-ADP-ribosylated at Lys-520 by SIRT6 in response to oxidative stress, promoting recruitment to double-strand breaks (DSBs) sites. Post-translationally, S-nitrosylated, leading to inhibit transcription regulation activity. In terms of processing, phosphorylated at Thr-593 by PRKDC in response to DNA damage following virus infection, promoting its translocation to the cytosol. Phosphorylated by TXK. Proteolytically cleaved by caspase-3 (CASP3) and caspase-7 (CASP7) in response to apoptosis to generate the Poly [ADP-ribose] polymerase 1, processed N-terminus and Poly [ADP-ribose] polymerase 1, processed C-terminus forms. Post-translationally, sumoylated with SUMO1 or SUMO2 by PIAS4 following prolonged residence (trapping) to chromatin. Sumoylation promotes ubiquitination by RNF4 and removal from chromatin by VCP/p97. In terms of processing, ubiquitinated by RNF4 following sumoylation by PIAS4 in response to prolonged residence (trapping) to chromatin. Ubiquitination promotes removal from chromatin by VCP/p97.

It localises to the chromosome. Its subcellular location is the nucleus. It is found in the nucleolus. The protein localises to the cytoplasm. The protein resides in the cytosol. It catalyses the reaction NAD(+) + (ADP-D-ribosyl)n-acceptor = nicotinamide + (ADP-D-ribosyl)n+1-acceptor + H(+).. The catalysed reaction is L-seryl-[protein] + NAD(+) = O-(ADP-D-ribosyl)-L-seryl-[protein] + nicotinamide + H(+). It carries out the reaction L-aspartyl-[protein] + NAD(+) = 4-O-(ADP-D-ribosyl)-L-aspartyl-[protein] + nicotinamide. The enzyme catalyses L-glutamyl-[protein] + NAD(+) = 5-O-(ADP-D-ribosyl)-L-glutamyl-[protein] + nicotinamide. It catalyses the reaction L-tyrosyl-[protein] + NAD(+) = O-(ADP-D-ribosyl)-L-tyrosyl-[protein] + nicotinamide + H(+). The catalysed reaction is L-histidyl-[protein] + NAD(+) = N(tele)-(ADP-D-ribosyl)-L-histidyl-[protein] + nicotinamide + H(+). With respect to regulation, ADP-ribosyltransferase activity is regulated via an allosteric activation mechanism. In absence of activation signal, PARP1 is autoinhibited by the PARP alpha-helical domain (also named HD region), which prevents effective NAD(+)-binding. Activity is highly stimulated by signals, such as DNA strand breaks. Binding to damaged DNA unfolds the PARP alpha-helical domain, relieving autoinhibition. Poly-ADP-ribosyltransferase activity is tightly regulated and PARP1 is removed from damaged chromatin following initial poly-ADP-ribosylation of chromatin to avoid prolonged residence (trapping) that has cytotoxic consequences. A number of factors (VCP/p97) or post-translational modifications (auto-poly-ADP-ribosylation or ubiquitination) promote PARP1 removal from chromatin. In terms of biological role, poly-ADP-ribosyltransferase that mediates poly-ADP-ribosylation of proteins and plays a key role in DNA repair. Mediates glutamate, aspartate, serine, histidine or tyrosine ADP-ribosylation of proteins: the ADP-D-ribosyl group of NAD(+) is transferred to the acceptor carboxyl group of target residues and further ADP-ribosyl groups are transferred to the 2'-position of the terminal adenosine moiety, building up a polymer with an average chain length of 20-30 units. Serine ADP-ribosylation of proteins constitutes the primary form of ADP-ribosylation of proteins in response to DNA damage. Specificity for the different amino acids is conferred by interacting factors, such as HPF1 and NMNAT1. Following interaction with HPF1, catalyzes serine ADP-ribosylation of target proteins; HPF1 confers serine specificity by completing the PARP1 active site. Also catalyzes tyrosine ADP-ribosylation of target proteins following interaction with HPF1. Following interaction with NMNAT1, catalyzes glutamate and aspartate ADP-ribosylation of target proteins; NMNAT1 confers glutamate and aspartate specificity. PARP1 initiates the repair of DNA breaks: recognizes and binds DNA breaks within chromatin and recruits HPF1, licensing serine ADP-ribosylation of target proteins, such as histones (H2BS6ADPr and H3S10ADPr), thereby promoting decompaction of chromatin and the recruitment of repair factors leading to the reparation of DNA strand breaks. HPF1 initiates serine ADP-ribosylation but restricts the polymerase activity of PARP1 in order to limit the length of poly-ADP-ribose chains. In addition to base excision repair (BER) pathway, also involved in double-strand breaks (DSBs) repair: together with TIMELESS, accumulates at DNA damage sites and promotes homologous recombination repair by mediating poly-ADP-ribosylation. Mediates the poly-ADP-ribosylation of a number of proteins, including itself, APLF, CHFR and NFAT5. In addition to proteins, also able to ADP-ribosylate DNA: catalyzes ADP-ribosylation of DNA strand break termini containing terminal phosphates and a 2'-OH group in single- and double-stranded DNA, respectively. Required for PARP9 and DTX3L recruitment to DNA damage sites. PARP1-dependent PARP9-DTX3L-mediated ubiquitination promotes the rapid and specific recruitment of 53BP1/TP53BP1, UIMC1/RAP80, and BRCA1 to DNA damage sites. PARP1-mediated DNA repair in neurons plays a role in sleep: senses DNA damage in neurons and promotes sleep, facilitating efficient DNA repair. In addition to DNA repair, also involved in other processes, such as transcription regulation, programmed cell death, membrane repair, adipogenesis and innate immunity. Acts as a repressor of transcription: binds to nucleosomes and modulates chromatin structure in a manner similar to histone H1, thereby altering RNA polymerase II. Acts both as a positive and negative regulator of transcription elongation, depending on the context. Acts as a positive regulator of transcription elongation by mediating poly-ADP-ribosylation of NELFE, preventing RNA-binding activity of NELFE and relieving transcription pausing. Acts as a negative regulator of transcription elongation in response to DNA damage by catalyzing poly-ADP-ribosylation of CCNT1, disrupting the phase separation activity of CCNT1 and subsequent activation of CDK9. Involved in replication fork progression following interaction with CARM1: mediates poly-ADP-ribosylation at replication forks, slowing fork progression. Poly-ADP-ribose chains generated by PARP1 also play a role in poly-ADP-ribose-dependent cell death, a process named parthanatos. Also acts as a negative regulator of the cGAS-STING pathway. Acts by mediating poly-ADP-ribosylation of CGAS: PARP1 translocates into the cytosol following phosphorylation by PRKDC and catalyzes poly-ADP-ribosylation and inactivation of CGAS. Acts as a negative regulator of adipogenesis: catalyzes poly-ADP-ribosylation of histone H2B on 'Glu-35' (H2BE35ADPr) following interaction with NMNAT1, inhibiting phosphorylation of H2B at 'Ser-36' (H2BS36ph), thereby blocking expression of pro-adipogenetic genes. Involved in the synthesis of ATP in the nucleus, together with NMNAT1, PARG and NUDT5. Nuclear ATP generation is required for extensive chromatin remodeling events that are energy-consuming. Functionally, promotes AIFM1-mediated apoptosis. This form, which translocates into the cytoplasm following cleavage by caspase-3 (CASP3) and caspase-7 (CASP7) in response to apoptosis, is auto-poly-ADP-ribosylated and serves as a poly-ADP-ribose carrier to induce AIFM1-mediated apoptosis. This cleavage form irreversibly binds to DNA breaks and interferes with DNA repair, promoting DNA damage-induced apoptosis. The chain is Poly [ADP-ribose] polymerase 1 (PARP1) from Cricetulus griseus (Chinese hamster).